A 322-amino-acid polypeptide reads, in one-letter code: Transcription initiation factor IIB (322 aa).

2 consecutive repeat copies span residues 125–213 (SLIN…VRDL) and 224–305 (NFVY…EIAQ).

The protein belongs to the TFIIB family.

Functionally, stabilizes TBP binding to an archaeal box-A promoter. Also responsible for recruiting RNA polymerase II to the pre-initiation complex (DNA-TBP-TFIIB). The chain is Transcription initiation factor IIB from Aeropyrum pernix (strain ATCC 700893 / DSM 11879 / JCM 9820 / NBRC 100138 / K1).